Here is a 147-residue protein sequence, read N- to C-terminus: Small ribosomal subunit protein uS12 (147 aa).

The protein belongs to the universal ribosomal protein uS12 family. Part of the 30S ribosomal subunit.

In terms of biological role, with S4 and S5 plays an important role in translational accuracy. Located at the interface of the 30S and 50S subunits. The polypeptide is Small ribosomal subunit protein uS12 (Thermococcus celer).